The following is a 337-amino-acid chain: Holliday junction branch migration complex subunit RuvB (337 aa).

A large ATPase domain (RuvB-L) region spans residues 4 to 184; it reads ADRLIQPQVL…FGIPLRLEFY (181 aa). Residues Arg-24, Gly-65, Lys-68, Thr-69, Thr-70, 131–133, Arg-174, Tyr-184, and Arg-221 contribute to the ATP site; that span reads EDY. Thr-69 is a Mg(2+) binding site. Residues 185–255 are small ATPAse domain (RuvB-S); that stretch reads NVKDLCTIVT…VAQQALDMLD (71 aa). Residues 258-337 form a head domain (RuvB-H) region; it reads QEGFDYLDRK…FNIITPDVPK (80 aa). DNA contacts are provided by Arg-294, Arg-313, and Arg-318.

It belongs to the RuvB family. As to quaternary structure, homohexamer. Forms an RuvA(8)-RuvB(12)-Holliday junction (HJ) complex. HJ DNA is sandwiched between 2 RuvA tetramers; dsDNA enters through RuvA and exits via RuvB. An RuvB hexamer assembles on each DNA strand where it exits the tetramer. Each RuvB hexamer is contacted by two RuvA subunits (via domain III) on 2 adjacent RuvB subunits; this complex drives branch migration. In the full resolvosome a probable DNA-RuvA(4)-RuvB(12)-RuvC(2) complex forms which resolves the HJ.

It localises to the cytoplasm. The catalysed reaction is ATP + H2O = ADP + phosphate + H(+). Functionally, the RuvA-RuvB-RuvC complex processes Holliday junction (HJ) DNA during genetic recombination and DNA repair, while the RuvA-RuvB complex plays an important role in the rescue of blocked DNA replication forks via replication fork reversal (RFR). RuvA specifically binds to HJ cruciform DNA, conferring on it an open structure. The RuvB hexamer acts as an ATP-dependent pump, pulling dsDNA into and through the RuvAB complex. RuvB forms 2 homohexamers on either side of HJ DNA bound by 1 or 2 RuvA tetramers; 4 subunits per hexamer contact DNA at a time. Coordinated motions by a converter formed by DNA-disengaged RuvB subunits stimulates ATP hydrolysis and nucleotide exchange. Immobilization of the converter enables RuvB to convert the ATP-contained energy into a lever motion, pulling 2 nucleotides of DNA out of the RuvA tetramer per ATP hydrolyzed, thus driving DNA branch migration. The RuvB motors rotate together with the DNA substrate, which together with the progressing nucleotide cycle form the mechanistic basis for DNA recombination by continuous HJ branch migration. Branch migration allows RuvC to scan DNA until it finds its consensus sequence, where it cleaves and resolves cruciform DNA. This chain is Holliday junction branch migration complex subunit RuvB, found in Shewanella denitrificans (strain OS217 / ATCC BAA-1090 / DSM 15013).